The sequence spans 225 residues: THAP domain-containing protein 1 B (225 aa).

The segment at 5–57 (CSAYGCKNRYDKDRPISFHKFPLKRPLLCKKWEAAVRRADFKPTKYSSICSDH) adopts a THAP-type zinc-finger fold. Positions 139–194 (VEDTVHQRRRIQQLEEQVDKLRKKLKIANQKCRRQERSLEKLEKEVSEYREAKGSG) form a coiled coil.

Belongs to the THAP1 family.

The protein resides in the nucleus. The protein localises to the nucleoplasm. In terms of biological role, DNA-binding transcription regulator that regulates endothelial cell proliferation and G1/S cell-cycle progression. Specifically binds the 5'-[AT]NTNN[GT]GGCA[AGT]-3' core DNA sequence and acts by modulating expression of pRB-E2F cell-cycle target genes. This is THAP domain-containing protein 1 B (thap1-b) from Xenopus laevis (African clawed frog).